We begin with the raw amino-acid sequence, 347 residues long: NADH-ubiquinone oxidoreductase chain 2 (347 aa).

The next 9 membrane-spanning stretches (helical) occupy residues 3–23 (PLAL…TMMS), 59–79 (YFMT…INLM), 93–115 (VASN…HFWV), 150–170 (NTNL…WGGL), 178–198 (ILAY…PFNP), 199–219 (TLTL…FMIL), 242–262 (IMLM…GFMP), 274–294 (NSII…YFYM), and 326–346 (LPTL…ISML).

This sequence belongs to the complex I subunit 2 family. As to quaternary structure, core subunit of respiratory chain NADH dehydrogenase (Complex I) which is composed of 45 different subunits. Interacts with TMEM242.

It localises to the mitochondrion inner membrane. It carries out the reaction a ubiquinone + NADH + 5 H(+)(in) = a ubiquinol + NAD(+) + 4 H(+)(out). Its function is as follows. Core subunit of the mitochondrial membrane respiratory chain NADH dehydrogenase (Complex I) which catalyzes electron transfer from NADH through the respiratory chain, using ubiquinone as an electron acceptor. Essential for the catalytic activity and assembly of complex I. The polypeptide is NADH-ubiquinone oxidoreductase chain 2 (Loxodonta africana (African elephant)).